The following is a 980-amino-acid chain: Exportin-T (980 aa).

It belongs to the exportin family. As to expression, expressed in roots, stems, leaves, flowers and embryos.

Its subcellular location is the nucleus. It is found in the cytoplasm. Probable tRNA nucleus export receptor which regulates tRNA processing and facilitates tRNA translocation across the nuclear pore complex. Is required for correct leaf initiation at different developmental stages and may play a role in floral patterning. This Oryza sativa subsp. japonica (Rice) protein is Exportin-T.